A 285-amino-acid polypeptide reads, in one-letter code: 2-dehydro-3-deoxyphosphooctonate aldolase (285 aa).

It belongs to the KdsA family.

It is found in the cytoplasm. It carries out the reaction D-arabinose 5-phosphate + phosphoenolpyruvate + H2O = 3-deoxy-alpha-D-manno-2-octulosonate-8-phosphate + phosphate. It functions in the pathway carbohydrate biosynthesis; 3-deoxy-D-manno-octulosonate biosynthesis; 3-deoxy-D-manno-octulosonate from D-ribulose 5-phosphate: step 2/3. Its pathway is bacterial outer membrane biogenesis; lipopolysaccharide biosynthesis. The polypeptide is 2-dehydro-3-deoxyphosphooctonate aldolase (Bordetella bronchiseptica (strain ATCC BAA-588 / NCTC 13252 / RB50) (Alcaligenes bronchisepticus)).